We begin with the raw amino-acid sequence, 445 residues long: Methionine aminopeptidase 2 (445 aa).

The tract at residues 1 to 76 (MAAQVASGVG…KKKCTSKVQT (76 aa)) is disordered. Residues 57-71 (AKKKKKKTKKKKKCT) are compositionally biased toward basic residues. H195 is a binding site for substrate. Residues D215, D226, and H295 each coordinate a divalent metal cation. H303 contacts substrate. Residues E331 and E426 each contribute to the a divalent metal cation site.

The protein belongs to the peptidase M24A family. Methionine aminopeptidase eukaryotic type 2 subfamily. Requires Co(2+) as cofactor. Zn(2+) serves as cofactor. The cofactor is Mn(2+). It depends on Fe(2+) as a cofactor.

Its subcellular location is the cytoplasm. The catalysed reaction is Release of N-terminal amino acids, preferentially methionine, from peptides and arylamides.. In terms of biological role, cotranslationally removes the N-terminal methionine from nascent proteins. The N-terminal methionine is often cleaved when the second residue in the primary sequence is small and uncharged (Met-Ala-, Cys, Gly, Pro, Ser, Thr, or Val). The protein is Methionine aminopeptidase 2 of Paracoccidioides lutzii (strain ATCC MYA-826 / Pb01) (Paracoccidioides brasiliensis).